Here is a 371-residue protein sequence, read N- to C-terminus: Cytochrome b (371 aa).

Helical transmembrane passes span 25-45 (FGSM…FLAI), 69-90 (WIMQ…YIHI), 105-125 (WLTG…GYVL), and 170-190 (FFAL…IHII). Histidine 75 and histidine 89 together coordinate heme b. Heme b is bound by residues histidine 174 and histidine 188. Histidine 193 is an a ubiquinone binding site. A run of 4 helical transmembrane segments spans residues 218-238 (YKDL…LSFM), 280-300 (LGGA…PFTH), 312-332 (LAQT…WAAT), and 339-358 (FLLI…IMNP).

The protein belongs to the cytochrome b family. In terms of assembly, the cytochrome bc1 complex contains 3 respiratory subunits (MT-CYB, CYC1 and UQCRFS1), 2 core proteins (UQCRC1 and UQCRC2) and probably 6 low-molecular weight proteins. Heme b is required as a cofactor.

It localises to the mitochondrion inner membrane. In terms of biological role, component of the ubiquinol-cytochrome c reductase complex (complex III or cytochrome b-c1 complex) that is part of the mitochondrial respiratory chain. The b-c1 complex mediates electron transfer from ubiquinol to cytochrome c. Contributes to the generation of a proton gradient across the mitochondrial membrane that is then used for ATP synthesis. The protein is Cytochrome b (MT-CYB) of Laticauda colubrina (Yellow-lipped sea krait).